A 141-amino-acid polypeptide reads, in one-letter code: MLNQIVVAGAIVRGCTVLVAQRVRPPELAGRWELPGGKVAAGETERAALARELAEELGLEVADLAVGDRVGDDIALNGTTTLRAYRVHLLGGEPRARDHRALCWVTAAELHDVDWVPADRGWIADLARTLNGSAADVHRRC.

Residues Leu-2–Asn-131 enclose the Nudix hydrolase domain. Residues Gly-37, Glu-52, Glu-55, and Glu-56 each contribute to the Mg(2+) site. The Nudix box motif lies at Gly-37–Gly-58.

This sequence belongs to the Nudix hydrolase family. It depends on Mg(2+) as a cofactor. Mn(2+) serves as cofactor.

The enzyme catalyses 8-oxo-dGTP + H2O = 8-oxo-dGMP + diphosphate + H(+). Its function is as follows. May be involved in the GO system responsible for removing an oxidatively damaged form of guanine (7,8-dihydro-8-oxoguanine, 8-oxo-dGTP) from DNA and the nucleotide pool. 8-oxo-dGTP is inserted opposite dA and dC residues of template DNA with almost equal efficiency thus leading to A.T to G.C transversions. MutT specifically degrades 8-oxo-dGTP to the monophosphate. In Mycobacterium tuberculosis (strain CDC 1551 / Oshkosh), this protein is Putative 8-oxo-dGTP diphosphatase 2 (mutT2).